A 276-amino-acid polypeptide reads, in one-letter code: 3-methyl-2-oxobutanoate hydroxymethyltransferase (276 aa).

D50 and D89 together coordinate Mg(2+). 3-methyl-2-oxobutanoate is bound by residues 50-51 (DS), D89, and K119. E121 lines the Mg(2+) pocket. Residue E188 is the Proton acceptor of the active site.

The protein belongs to the PanB family. Homodecamer; pentamer of dimers. Mg(2+) is required as a cofactor.

It localises to the cytoplasm. It carries out the reaction 3-methyl-2-oxobutanoate + (6R)-5,10-methylene-5,6,7,8-tetrahydrofolate + H2O = 2-dehydropantoate + (6S)-5,6,7,8-tetrahydrofolate. It functions in the pathway cofactor biosynthesis; (R)-pantothenate biosynthesis; (R)-pantoate from 3-methyl-2-oxobutanoate: step 1/2. Functionally, catalyzes the reversible reaction in which hydroxymethyl group from 5,10-methylenetetrahydrofolate is transferred onto alpha-ketoisovalerate to form ketopantoate. The sequence is that of 3-methyl-2-oxobutanoate hydroxymethyltransferase from Paracoccus denitrificans (strain Pd 1222).